Consider the following 73-residue polypeptide: MSKLGVLLTICLLLFPLTALPMDGDQSVDRPAERMQDDISSEQYPLFNQKRRCCGEGASCPVYSRDRLICSCC.

An N-terminal signal peptide occupies residues 1 to 19 (MSKLGVLLTICLLLFPLTA). The propeptide occupies 20–49 (LPMDGDQSVDRPAERMQDDISSEQYPLFNQ). 3 disulfides stabilise this stretch: Cys-53–Cys-72, Cys-54–Cys-70, and Cys-60–Cys-73.

It belongs to the conotoxin M superfamily. In terms of tissue distribution, expressed by the venom duct.

Its subcellular location is the secreted. Its function is as follows. Shows a paralytic effect in fish. The sequence is that of Conotoxin CnIIIE from Conus consors (Singed cone).